A 450-amino-acid chain; its full sequence is Phosphoglucosamine mutase (450 aa).

S101 functions as the Phosphoserine intermediate in the catalytic mechanism. Residues S101, D240, D242, and D244 each coordinate Mg(2+). S101 is modified (phosphoserine).

Belongs to the phosphohexose mutase family. The cofactor is Mg(2+). In terms of processing, activated by phosphorylation.

The catalysed reaction is alpha-D-glucosamine 1-phosphate = D-glucosamine 6-phosphate. Catalyzes the conversion of glucosamine-6-phosphate to glucosamine-1-phosphate. The chain is Phosphoglucosamine mutase from Streptococcus agalactiae serotype Ia (strain ATCC 27591 / A909 / CDC SS700).